The chain runs to 185 residues: Threonylcarbamoyl-AMP synthase (185 aa).

The YrdC-like domain maps to 4-185; that stretch reads SWRVQQAARE…LATGEVVRPG (182 aa).

Belongs to the SUA5 family. TsaC subfamily.

Its subcellular location is the cytoplasm. The catalysed reaction is L-threonine + hydrogencarbonate + ATP = L-threonylcarbamoyladenylate + diphosphate + H2O. Its function is as follows. Required for the formation of a threonylcarbamoyl group on adenosine at position 37 (t(6)A37) in tRNAs that read codons beginning with adenine. Catalyzes the conversion of L-threonine, HCO(3)(-)/CO(2) and ATP to give threonylcarbamoyl-AMP (TC-AMP) as the acyladenylate intermediate, with the release of diphosphate. The protein is Threonylcarbamoyl-AMP synthase of Pseudomonas entomophila (strain L48).